We begin with the raw amino-acid sequence, 340 residues long: UDP-3-O-acylglucosamine N-acyltransferase (340 aa).

The Proton acceptor role is filled by His-238.

The protein belongs to the transferase hexapeptide repeat family. LpxD subfamily. As to quaternary structure, homotrimer.

The catalysed reaction is a UDP-3-O-[(3R)-3-hydroxyacyl]-alpha-D-glucosamine + a (3R)-hydroxyacyl-[ACP] = a UDP-2-N,3-O-bis[(3R)-3-hydroxyacyl]-alpha-D-glucosamine + holo-[ACP] + H(+). It participates in bacterial outer membrane biogenesis; LPS lipid A biosynthesis. Functionally, catalyzes the N-acylation of UDP-3-O-acylglucosamine using 3-hydroxyacyl-ACP as the acyl donor. Is involved in the biosynthesis of lipid A, a phosphorylated glycolipid that anchors the lipopolysaccharide to the outer membrane of the cell. The chain is UDP-3-O-acylglucosamine N-acyltransferase from Psychromonas ingrahamii (strain DSM 17664 / CCUG 51855 / 37).